We begin with the raw amino-acid sequence, 702 residues long: Elongation factor G 2 (702 aa).

The tr-type G domain maps to 8–285; the sequence is DMVRNIGISA…AVTYYLPSPA (278 aa). Residues 17-24, 84-88, and 138-141 each bind GTP; these read AHIDSGKT, DTPGH, and NKLD.

It belongs to the TRAFAC class translation factor GTPase superfamily. Classic translation factor GTPase family. EF-G/EF-2 subfamily.

It is found in the cytoplasm. In terms of biological role, catalyzes the GTP-dependent ribosomal translocation step during translation elongation. During this step, the ribosome changes from the pre-translocational (PRE) to the post-translocational (POST) state as the newly formed A-site-bound peptidyl-tRNA and P-site-bound deacylated tRNA move to the P and E sites, respectively. Catalyzes the coordinated movement of the two tRNA molecules, the mRNA and conformational changes in the ribosome. The polypeptide is Elongation factor G 2 (Bdellovibrio bacteriovorus (strain ATCC 15356 / DSM 50701 / NCIMB 9529 / HD100)).